The sequence spans 723 residues: Pentatricopeptide repeat-containing protein At5g50280, chloroplastic (723 aa).

The transit peptide at M1 to S44 directs the protein to the chloroplast. Residues I70–T97 form a disordered region. Over residues E81–T97 the composition is skewed to acidic residues. 11 PPR repeats span residues D272–P306, D307–W342, S343–S377, N378–P412, S413–P447, N448–P483, S484–P518, S519–G553, T554–P588, S589–P623, and D624–P658. The interval T700–S723 is disordered. Positions N713–S723 are enriched in polar residues.

Belongs to the PPR family. P subfamily.

It localises to the plastid. The protein localises to the chloroplast. This Arabidopsis thaliana (Mouse-ear cress) protein is Pentatricopeptide repeat-containing protein At5g50280, chloroplastic (EMB1006).